The primary structure comprises 225 residues: MOB-like protein phocein (225 aa).

Residues cysteine 92, cysteine 97, cysteine 110, histidine 113, cysteine 119, histidine 127, histidine 169, and histidine 174 each contribute to the Zn(2+) site.

The protein belongs to the MOB1/phocein family. In terms of assembly, binds STRN4. Interacts with DNM1 and EPS15. Interacts with nucleoside diphosphate kinase. Interacts with CTTNBP2. Interacts with CTTNBP2NL. Part of the core of STRIPAK complexes composed of PP2A catalytic and scaffolding subunits, the striatins (PP2A regulatory subunits), the striatin-associated proteins MOB4, STRIP1 and STRIP2, PDCD10 and members of the STE20 kinases, such as STK24 and STK26. Phosphorylated on serine residues. Highly expressed in adrenal gland, spinal cord, brain and cerebellum. Detected at lower levels in heart and skeletal muscle, and at very low levels in spleen, liver and intestine.

It localises to the cytoplasm. The protein resides in the membrane. It is found in the golgi apparatus. The protein localises to the golgi stack membrane. In terms of biological role, part of the striatin-interacting phosphatase and kinase (STRIPAK) complexes. STRIPAK complexes have critical roles in protein (de)phosphorylation and are regulators of multiple signaling pathways including Hippo, MAPK, nuclear receptor and cytoskeleton remodeling. Different types of STRIPAK complexes are involved in a variety of biological processes such as cell growth, differentiation, apoptosis, metabolism and immune regulation. The chain is MOB-like protein phocein (Mob4) from Rattus norvegicus (Rat).